The chain runs to 158 residues: SsrA-binding protein (158 aa).

A compositionally biased stretch (basic and acidic residues) spans 133-147 (KRQALRERQDNREAQ). The tract at residues 133–158 (KRQALRERQDNREAQRAMASRKHLGE) is disordered.

The protein belongs to the SmpB family.

Its subcellular location is the cytoplasm. Functionally, required for rescue of stalled ribosomes mediated by trans-translation. Binds to transfer-messenger RNA (tmRNA), required for stable association of tmRNA with ribosomes. tmRNA and SmpB together mimic tRNA shape, replacing the anticodon stem-loop with SmpB. tmRNA is encoded by the ssrA gene; the 2 termini fold to resemble tRNA(Ala) and it encodes a 'tag peptide', a short internal open reading frame. During trans-translation Ala-aminoacylated tmRNA acts like a tRNA, entering the A-site of stalled ribosomes, displacing the stalled mRNA. The ribosome then switches to translate the ORF on the tmRNA; the nascent peptide is terminated with the 'tag peptide' encoded by the tmRNA and targeted for degradation. The ribosome is freed to recommence translation, which seems to be the essential function of trans-translation. In Leifsonia xyli subsp. xyli (strain CTCB07), this protein is SsrA-binding protein.